The primary structure comprises 93 residues: Acylphosphatase (93 aa).

Residues 5 to 93 (TAILRVTGFV…EDRKTFDIVY (89 aa)) enclose the Acylphosphatase-like domain. Residues Arg20 and Asn38 contribute to the active site.

It belongs to the acylphosphatase family.

It carries out the reaction an acyl phosphate + H2O = a carboxylate + phosphate + H(+). In Listeria welshimeri serovar 6b (strain ATCC 35897 / DSM 20650 / CCUG 15529 / CIP 8149 / NCTC 11857 / SLCC 5334 / V8), this protein is Acylphosphatase (acyP).